The sequence spans 381 residues: Methanesulfonate monooxygenase (381 aa).

The protein belongs to the SsuD family.

It carries out the reaction an alkanesulfonate + FMNH2 + O2 = an aldehyde + FMN + sulfite + H2O + 2 H(+). Functionally, catalyzes the desulfonation of aliphatic sulfonates. Shows highest activity with methanesulfonate. This Pseudomonas aeruginosa (strain ATCC 15692 / DSM 22644 / CIP 104116 / JCM 14847 / LMG 12228 / 1C / PRS 101 / PAO1) protein is Methanesulfonate monooxygenase (msuD).